Here is a 336-residue protein sequence, read N- to C-terminus: UDP-glucose 4-epimerase (336 aa).

NAD(+)-binding positions include 11-12, 31-36, 58-59, 80-84, Asn99, Ser124, Tyr149, Lys153, and Phe178; these read YI, DNLINS, DI, and FAGLK. Residues Ser124 and Tyr149 each coordinate substrate. Residue Tyr149 is the Proton acceptor of the active site. Substrate-binding positions include Asn179, 199–200, 216–218, Arg231, and 290–293; these read NL, LVY, and RPGD.

The protein belongs to the NAD(P)-dependent epimerase/dehydratase family. In terms of assembly, homodimer. NAD(+) is required as a cofactor.

The catalysed reaction is UDP-alpha-D-glucose = UDP-alpha-D-galactose. It participates in carbohydrate metabolism; galactose metabolism. Functionally, involved in the metabolism of galactose. Catalyzes the conversion of UDP-galactose (UDP-Gal) to UDP-glucose (UDP-Glc) through a mechanism involving the transient reduction of NAD. The polypeptide is UDP-glucose 4-epimerase (galE) (Yersinia enterocolitica).